The sequence spans 430 residues: Potassium channel subfamily K member 12 (430 aa).

Over 1-38 (MSSRSPRPPPRRCRRRLPRPSCCCCCCRRSHLNEDTGR) the chain is Cytoplasmic. An ER retention/retrieval signal region spans residues 11-16 (RRCRRR). The chain crosses the membrane as a helical span at residues 39-59 (FVLLAALIGLYLVAGATVFSA). N-linked (GlcNAc...) asparagine glycosylation occurs at N78. The segment at residues 114-134 (WDFPGAFYFVGTVVSTIGFGM) is an intramembrane region (pore-forming). K(+) contacts are provided by T129, I130, and G131. The tract at residues 129-134 (TIGFGM) is selectivity filter 1. A helical transmembrane segment spans residues 145-165 (FLIAYGLFGCAGTILFFNLFL). Over 166 to 212 (ERIISLLAFIMRACRERQLRRSGLLPATFRRGSALSEADSLAGWKPS) the chain is Cytoplasmic. A helical transmembrane segment spans residues 213-233 (VYHVLLILGLFAVLLACCASA). Residues 243–263 (YVDSLYFCFVTFSTIGFGDLV) constitute an intramembrane region (pore-forming). T256, I257, G258, and F259 together coordinate K(+). Residues 256–261 (TIGFGD) are selectivity filter 2. A helical transmembrane segment spans residues 282–302 (LFILLGVCCIYSLFNVISILI). Over 303–430 (KQVLNWMLRK…NRLAETSASR (128 aa)) the chain is Cytoplasmic.

The protein belongs to the two pore domain potassium channel (TC 1.A.1.8) family. As to quaternary structure, homodimer. Heterodimer with KCNK13. Highly expressed in most brain regions. Also expressed in other tissues such as lung, kidney, liver, stomach and spleen.

It localises to the cell membrane. Its subcellular location is the endoplasmic reticulum membrane. It catalyses the reaction K(+)(in) = K(+)(out). Its function is as follows. K(+) channel subunit that may homo- and heterodimerize to form functional channels with distinct regulatory and gating properties. Can heterodimerize with KCNK13 subunit to conduct K(+) outward rectifying currents at the plasma membrane. The homodimers are mainly retained in the endoplasmic reticulum compartment and may be targeted to the cell surface upon phosphorylation or other activation signals yet to be elucidated. This Rattus norvegicus (Rat) protein is Potassium channel subfamily K member 12 (Kcnk12).